A 214-amino-acid polypeptide reads, in one-letter code: Adenylate kinase (214 aa).

10–15 (GGGKGT) provides a ligand contact to ATP. An NMP region spans residues 30–59 (STGDMFRENVKGGTELGLKAKEYMDAGQLV). AMP-binding positions include Thr31, Arg36, 57-59 (QLV), 85-88 (GFPR), and Gln92. The segment at 126 to 163 (GRRVCRVCGATFHVLFNAPKEDGKCDKCGGELYQRSDD) is LID. Arg127 provides a ligand contact to ATP. 2 residues coordinate Zn(2+): Cys130 and Cys133. 136-137 (TF) is an ATP binding site. Residues Cys150 and Cys153 each contribute to the Zn(2+) site. Residues Arg160 and Arg171 each contribute to the AMP site. Gln199 serves as a coordination point for ATP.

The protein belongs to the adenylate kinase family. Monomer.

The protein localises to the cytoplasm. It carries out the reaction AMP + ATP = 2 ADP. The protein operates within purine metabolism; AMP biosynthesis via salvage pathway; AMP from ADP: step 1/1. Functionally, catalyzes the reversible transfer of the terminal phosphate group between ATP and AMP. Plays an important role in cellular energy homeostasis and in adenine nucleotide metabolism. In Desulforudis audaxviator (strain MP104C), this protein is Adenylate kinase.